The sequence spans 335 residues: Tetraacyldisaccharide 4'-kinase (335 aa).

58-65 (VVGGSGKT) serves as a coordination point for ATP.

Belongs to the LpxK family.

The catalysed reaction is a lipid A disaccharide + ATP = a lipid IVA + ADP + H(+). The protein operates within glycolipid biosynthesis; lipid IV(A) biosynthesis; lipid IV(A) from (3R)-3-hydroxytetradecanoyl-[acyl-carrier-protein] and UDP-N-acetyl-alpha-D-glucosamine: step 6/6. Functionally, transfers the gamma-phosphate of ATP to the 4'-position of a tetraacyldisaccharide 1-phosphate intermediate (termed DS-1-P) to form tetraacyldisaccharide 1,4'-bis-phosphate (lipid IVA). The chain is Tetraacyldisaccharide 4'-kinase from Hydrogenovibrio crunogenus (strain DSM 25203 / XCL-2) (Thiomicrospira crunogena).